The chain runs to 496 residues: MISRAAAPSSSIASLSSRSLRAQAPAARSFATVQDNAPPVKHYGGLKDQDRIFTNLYGHHGADLKSAMKYGDWHRTKDIVLKGHDWLISELKASGLRGRGGAGFPSGLKYSFMNFKDWDKDPRPRYLVVNADEGEPGTCKDREIMRKDPQKLIEGCLVVGRAMNANAAYMYIRGEFYQEATVLQRAINEAYEAGLIGKNACGTGYDFDVYIHRGMGAYVCGEETSLIESIEGKAGKPRLKPPFPAAVGLFGCPSTVTNVETVAVTPTIMRRGASWFSSFGRERNAGTKLFCISGHVNNPCTVEEEMSISLRDVIDRHCGGVRGGWDNLLAVIPGGSSTPVLPKTICDDQLMDFDALKDSQSGLGTAAVIVMDKSTDIVRAISRLSTFYKHESCGQCTPCREGSKWTMHMMQRMEKGQAREREIDMLQELTKQVEGHTICALGEAFAWPIQGLIRHFRPELEARIREYSKEVGGNGPYAGGWHPEARAEGKLISPGM.

The N-terminal 30 residues, Met-1 to Phe-30, are a transit peptide targeting the mitochondrion. Gly-98–Gly-107 is a binding site for NAD(+). Gly-214–Thr-261 contributes to the FMN binding site. Positions 393, 396, 399, and 439 each coordinate [4Fe-4S] cluster.

Belongs to the complex I 51 kDa subunit family. As to quaternary structure, complex I is composed of about 40 different subunits. This is a component of the flavoprotein-sulfur (FP) fragment of the enzyme. Requires FMN as cofactor. [4Fe-4S] cluster is required as a cofactor.

The protein resides in the mitochondrion inner membrane. It catalyses the reaction a ubiquinone + NADH + 5 H(+)(in) = a ubiquinol + NAD(+) + 4 H(+)(out). Core subunit of the mitochondrial membrane respiratory chain NADH dehydrogenase (Complex I) that is believed to belong to the minimal assembly required for catalysis. Complex I functions in the transfer of electrons from NADH to the respiratory chain. The immediate electron acceptor for the enzyme is believed to be ubiquinone. The protein is NADH-ubiquinone oxidoreductase 51 kDa subunit, mitochondrial (NUO51) of Aspergillus niger.